We begin with the raw amino-acid sequence, 66 residues long: Large ribosomal subunit protein bL32 (66 aa).

A compositionally biased stretch (basic residues) spans 1 to 19 (MAIVPKRKTSKQRKHKRNT). The tract at residues 1-21 (MAIVPKRKTSKQRKHKRNTHS) is disordered.

The protein belongs to the bacterial ribosomal protein bL32 family.

The chain is Large ribosomal subunit protein bL32 from Mycoplasmopsis synoviae (strain 53) (Mycoplasma synoviae).